A 152-amino-acid polypeptide reads, in one-letter code: MAKRVQVVLNEDIKSLGNDGDLVEVAPGFARNFLLPNKKALPVTPTVLKQVEHRRAKQAEKEAAKKQEAIDFQTALTTIGRFTVKKQVGEDGVLFGTVTNGDVAEVVKEATKKDIDRRDISIPEIHGVGKYKVQIKLHNEVNAEINLEVTSY.

It belongs to the bacterial ribosomal protein bL9 family.

Functionally, binds to the 23S rRNA. The chain is Large ribosomal subunit protein bL9 from Prochlorococcus marinus (strain NATL2A).